The chain runs to 560 residues: MVPHAILARGRDVCRRNGLLILSVLSVIVGCLLGFFLRTRRLSPQEISYFQFPGELLMRMLKMMILPLVVSSLMSGLASLDAKTSSRLGVLTVAYYLWTTFMAVIVGIFMVSIIHPGSAAQKETTEQSGKPIMSSADALLDLIRNMFPANLVEATFKQYRTKTTPVVKSPKVAPEEAPPRRILIYGVQEENGSHVQNFALDLTPPPEVVYKSEPGTSDGMNVLGIVFFSATMGIMLGRMGDSGAPLVSFCQCLNESVMKIVAVAVWYFPFGIVFLIAGKILEMDDPRAVGKKLGFYSVTVVCGLVLHGLFILPLLYFFITKKNPIVFIRGILQALLIALATSSSSATLPITFKCLLENNHIDRRIARFVLPVGATINMDGTALYEAVAAIFIAQVNNYELDFGQIITISITATAASIGAAGIPQAGLVTMVIVLTSVGLPTDDITLIIAVDWALDRFRTMINVLGDALAAGIMAHICRKDFARDTGTEKLLPCETKPVSLQEIVAAQQNGCVKSVAEASELTLGPTCPHHVPVQVEQDEELPAASLNHCTIQISELETNV.

Residues 1–16 (MVPHAILARGRDVCRR) are Cytoplasmic-facing. Helical transmembrane passes span 17 to 37 (NGLLILSVLSVIVGCLLGFFL), 60 to 80 (MLKMMILPLVVSSLMSGLASL), and 94 to 114 (AYYLWTTFMAVIVGIFMVSII). The Extracellular portion of the chain corresponds to 115–216 (HPGSAAQKET…EVVYKSEPGT (102 aa)). The N-linked (GlcNAc...) asparagine glycan is linked to N191. 7 consecutive transmembrane segments (helical) span residues 217-237 (SDGMNVLGIVFFSATMGIMLG), 260-280 (IVAVAVWYFPFGIVFLIAGKI), 300-320 (VVCGLVLHGLFILPLLYFFIT), 330-350 (GILQALLIALATSSSSATLPI), 372-392 (VGATINMDGTALYEAVAAIFI), 414-434 (AASIGAAGIPQAGLVTMVIVL), and 457-477 (FRTMINVLGDALAAGIMAHIC).

This sequence belongs to the dicarboxylate/amino acid:cation symporter (DAACS) (TC 2.A.23) family. SLC1A7 subfamily. Interacts with the PDZ domains of DLG4. In terms of tissue distribution, expressed primarily in retina. Detectable in liver, heart, muscle and brain.

It localises to the photoreceptor inner segment membrane. It is found in the synaptic cell membrane. The enzyme catalyses K(+)(in) + L-glutamate(out) + 3 Na(+)(out) + H(+)(out) = K(+)(out) + L-glutamate(in) + 3 Na(+)(in) + H(+)(in). It carries out the reaction K(+)(in) + L-aspartate(out) + 3 Na(+)(out) + H(+)(out) = K(+)(out) + L-aspartate(in) + 3 Na(+)(in) + H(+)(in). It catalyses the reaction D-aspartate(out) + K(+)(in) + 3 Na(+)(out) + H(+)(out) = D-aspartate(in) + K(+)(out) + 3 Na(+)(in) + H(+)(in). Sodium-dependent, high-affinity amino acid transporter that mediates the uptake of L-glutamate and also L-aspartate and D-aspartate. Functions as a symporter that transports one amino acid molecule together with two or three Na(+) ions and one proton, in parallel with the counter-transport of one K(+) ion. Acts primarily as an inhibitory glutamate-gated chloride channel being a major inhibitory presynaptic receptor at mammalian rod bipolar cell axon terminals. Glutamate binding gates a large Cl(-) conductance that mediates inhibition, affecting visual processing in the retina. This Homo sapiens (Human) protein is Excitatory amino acid transporter 5.